Consider the following 310-residue polypeptide: Protein translocase subunit SecF (310 aa).

The next 6 membrane-spanning stretches (helical) occupy residues 20–42, 140–160, 164–184, 194–214, 246–266, and 272–292; these read FKKVSYTFSIILSLISVISIGIY, IEAGTMAMLFSFLAIMVYIWV, WYFGLGILIALMHDLILALGF, LSTIAAVLTIIGYSVNDSVVI, ILTVITTLLANLALILFGGEA, and VLVFFGIIAGTYSSIFISAPI.

This sequence belongs to the SecD/SecF family. SecF subfamily. As to quaternary structure, forms a complex with SecD. Part of the essential Sec protein translocation apparatus which comprises SecA, SecYEG and auxiliary proteins SecDF-YajC and YidC.

Its subcellular location is the cell inner membrane. In terms of biological role, part of the Sec protein translocase complex. Interacts with the SecYEG preprotein conducting channel. SecDF uses the proton motive force (PMF) to complete protein translocation after the ATP-dependent function of SecA. This chain is Protein translocase subunit SecF, found in Rickettsia canadensis (strain McKiel).